Here is a 164-residue protein sequence, read N- to C-terminus: Protein phosphatase 1 regulatory subunit 14C (164 aa).

Residues Met-1–Ala-19 show a composition bias toward gly residues. The tract at residues Met-1–Thr-72 is disordered. Ser-2 carries the N-acetylserine modification. Position 25 is a phosphoserine (Ser-25). At Arg-27 the chain carries Omega-N-methylarginine. At Ser-33 the chain carries Phosphoserine. Low complexity predominate over residues Val-50–Gln-62. Thr-72 bears the Phosphothreonine; by ILK1 mark.

Belongs to the PP1 inhibitor family. In terms of processing, has over 600-fold higher inhibitory activity when phosphorylated, creating a molecular switch for regulating the phosphorylation status of PPP1CA substrates and smooth muscle contraction. The main inhibitory site appears to be Thr-72.

It is found in the endomembrane system. Functionally, inhibitor of the PP1 regulatory subunit PPP1CA. In Rattus norvegicus (Rat), this protein is Protein phosphatase 1 regulatory subunit 14C (Ppp1r14c).